A 427-amino-acid chain; its full sequence is Serine--tRNA ligase (427 aa).

Residue Thr228 to Glu230 participates in L-serine binding. ATP is bound at residue Arg259 to Glu261. Residue Glu282 participates in L-serine binding. ATP is bound at residue Glu346–Ser349. Ser384 serves as a coordination point for L-serine.

This sequence belongs to the class-II aminoacyl-tRNA synthetase family. Type-1 seryl-tRNA synthetase subfamily. Homodimer. The tRNA molecule binds across the dimer.

It localises to the cytoplasm. The enzyme catalyses tRNA(Ser) + L-serine + ATP = L-seryl-tRNA(Ser) + AMP + diphosphate + H(+). The catalysed reaction is tRNA(Sec) + L-serine + ATP = L-seryl-tRNA(Sec) + AMP + diphosphate + H(+). The protein operates within aminoacyl-tRNA biosynthesis; selenocysteinyl-tRNA(Sec) biosynthesis; L-seryl-tRNA(Sec) from L-serine and tRNA(Sec): step 1/1. In terms of biological role, catalyzes the attachment of serine to tRNA(Ser). Is also able to aminoacylate tRNA(Sec) with serine, to form the misacylated tRNA L-seryl-tRNA(Sec), which will be further converted into selenocysteinyl-tRNA(Sec). This is Serine--tRNA ligase from Ehrlichia ruminantium (strain Welgevonden).